Consider the following 357-residue polypeptide: Peptide chain release factor 1 (357 aa).

N5-methylglutamine is present on Gln-236. The span at 284–293 (RRKKDQERAN) shows a compositional bias: basic and acidic residues. The interval 284–313 (RRKKDQERANNRRKQIGSGDRSERIRTYNF) is disordered.

This sequence belongs to the prokaryotic/mitochondrial release factor family. Post-translationally, methylated by PrmC. Methylation increases the termination efficiency of RF1.

The protein resides in the cytoplasm. In terms of biological role, peptide chain release factor 1 directs the termination of translation in response to the peptide chain termination codons UAG and UAA. This Rickettsia bellii (strain RML369-C) protein is Peptide chain release factor 1.